The primary structure comprises 201 residues: MLNALGVIVSGRLVQTDFQQISDSHFLITIPDADNVNHVVVFLTGTTPFPDGMAGGVYFSWPDPNAPPNWQLLGYISNTKPSAIFKISQLKKLDEIAGQSTMMNNVFGSNLPISHIAQIGVSIEPESSLVQQTPSTTTSSTYYQFGQKIVENFFNFVSSFSITQSQMTPAPNETFVPLSTVQTWYTNFERRLQQNPNFWKN.

This sequence belongs to the OPI10 family.

The chain is Protein OPI10 homolog from Anopheles gambiae (African malaria mosquito).